The primary structure comprises 322 residues: Ribose-phosphate pyrophosphokinase 1 (322 aa).

ATP contacts are provided by residues 39 to 41 and 98 to 99; these read DGE and RQ. Mg(2+) contacts are provided by H132 and D173. K196 is an active-site residue. D-ribose 5-phosphate is bound by residues R198, D224, and 228–232; that span reads DTAGT.

This sequence belongs to the ribose-phosphate pyrophosphokinase family. Class I subfamily. As to quaternary structure, homohexamer. It depends on Mg(2+) as a cofactor.

The protein resides in the cytoplasm. The catalysed reaction is D-ribose 5-phosphate + ATP = 5-phospho-alpha-D-ribose 1-diphosphate + AMP + H(+). It participates in metabolic intermediate biosynthesis; 5-phospho-alpha-D-ribose 1-diphosphate biosynthesis; 5-phospho-alpha-D-ribose 1-diphosphate from D-ribose 5-phosphate (route I): step 1/1. Its function is as follows. Involved in the biosynthesis of the central metabolite phospho-alpha-D-ribosyl-1-pyrophosphate (PRPP) via the transfer of pyrophosphoryl group from ATP to 1-hydroxyl of ribose-5-phosphate (Rib-5-P). This is Ribose-phosphate pyrophosphokinase 1 from Streptococcus pneumoniae serotype 4 (strain ATCC BAA-334 / TIGR4).